A 353-amino-acid chain; its full sequence is Protein RecA (353 aa).

67 to 74 (GPESSGKT) serves as a coordination point for ATP. Residues 330–353 (SNPNSTPDFSVDDSEGVAETNEDF) form a disordered region. The segment covering 339-353 (SVDDSEGVAETNEDF) has biased composition (acidic residues).

It belongs to the RecA family.

It is found in the cytoplasm. In terms of biological role, can catalyze the hydrolysis of ATP in the presence of single-stranded DNA, the ATP-dependent uptake of single-stranded DNA by duplex DNA, and the ATP-dependent hybridization of homologous single-stranded DNAs. It interacts with LexA causing its activation and leading to its autocatalytic cleavage. The polypeptide is Protein RecA (Shigella sonnei).